Consider the following 558-residue polypeptide: Xylulose kinase 2 (558 aa).

Substrate-binding positions include Asp-16, 20 to 23, Ser-111, and Asp-283; that span reads QSMK. Residues Thr-305 and 456–460 contribute to the ATP site; that span reads GASAN.

This sequence belongs to the FGGY kinase family. It depends on a divalent metal cation as a cofactor.

It is found in the cytoplasm. It catalyses the reaction D-xylulose + ATP = D-xylulose 5-phosphate + ADP + H(+). It functions in the pathway isoprenoid biosynthesis; carotenoid biosynthesis. Repressed by oxo-clomazone (keto-clomazone), a bleaching herbicide. Its function is as follows. Mediates 1-deoxy-D-xylulose (DX) phosphorylation in the cytoplasm prior to the translocation of 1-deoxy-D-xylulose 5-phosphate into plastids. Can also phosphorylate D-xylulose (Xyl). Uses preferentially ATP as cosubstrate. The protein is Xylulose kinase 2 of Arabidopsis thaliana (Mouse-ear cress).